The chain runs to 159 residues: Ribosomal RNA large subunit methyltransferase H (159 aa).

S-adenosyl-L-methionine is bound by residues Leu-76, Gly-108, and 127–132 (FGLLTL).

It belongs to the RNA methyltransferase RlmH family. Homodimer.

It localises to the cytoplasm. It catalyses the reaction pseudouridine(1915) in 23S rRNA + S-adenosyl-L-methionine = N(3)-methylpseudouridine(1915) in 23S rRNA + S-adenosyl-L-homocysteine + H(+). Its function is as follows. Specifically methylates the pseudouridine at position 1915 (m3Psi1915) in 23S rRNA. This is Ribosomal RNA large subunit methyltransferase H from Streptococcus pyogenes serotype M3 (strain SSI-1).